Reading from the N-terminus, the 393-residue chain is CCCH-type zinc finger protein oma-2 (393 aa).

The tract at residues 1 to 26 (MDMLKENVIQNNEARTESSVEPSHPD) is disordered. Residues 14–26 (ARTESSVEPSHPD) are compositionally biased toward basic and acidic residues. 2 consecutive C3H1-type zinc fingers follow at residues 105-133 (SYKT…HGEE) and 147-175 (KYRT…HPDN). Disordered regions lie at residues 227 to 251 (TPDE…RYEL) and 311 to 340 (KQST…LTAA). The segment covering 313–340 (STPGGVSGYSSSGSTPSQDSDSSPLTAA) has biased composition (low complexity). T327 is subject to Phosphothreonine; by GSK3.

In terms of tissue distribution, exclusively expressed in the hermaphrodite gonad. Expression only in cellulized oocytes. Widely distributed throughout gonadal oocytes from the mitotic stage to the developing diakinesis stage.

It localises to the cytoplasm. It is found in the cytoplasmic granule. The protein resides in the cytoskeleton. The protein localises to the microtubule organizing center. Its subcellular location is the centrosome. Zinc-finger RNA-binding protein that binds to 5'-UA[AU]-3' motifs in the 3'-UTR of maternal mRNAs to suppress translation in oocytes and embryos. Acts redundantly with oma-1 to control the temporal expression and distribution of maternal proteins and thereby promote meiotic progression, oocyte maturation, fertilization and embryonic development. Also, together with oma-1, is involved in P-granule distribution during embryonic development. This is CCCH-type zinc finger protein oma-2 from Caenorhabditis elegans.